The sequence spans 892 residues: Alanine--tRNA ligase (892 aa).

Zn(2+) contacts are provided by His596, His600, Cys700, and His704.

This sequence belongs to the class-II aminoacyl-tRNA synthetase family. Requires Zn(2+) as cofactor.

It is found in the cytoplasm. It catalyses the reaction tRNA(Ala) + L-alanine + ATP = L-alanyl-tRNA(Ala) + AMP + diphosphate. Catalyzes the attachment of alanine to tRNA(Ala) in a two-step reaction: alanine is first activated by ATP to form Ala-AMP and then transferred to the acceptor end of tRNA(Ala). Also edits incorrectly charged Ser-tRNA(Ala) and Gly-tRNA(Ala) via its editing domain. This chain is Alanine--tRNA ligase, found in Methanococcus vannielii (strain ATCC 35089 / DSM 1224 / JCM 13029 / OCM 148 / SB).